The primary structure comprises 377 residues: Cobalt-precorrin-5B C(1)-methyltransferase (377 aa).

Positions 1 to 21 (MNPVRQPYDLAAPAPNGMRRG) are disordered.

The protein belongs to the CbiD family.

The enzyme catalyses Co-precorrin-5B + S-adenosyl-L-methionine = Co-precorrin-6A + S-adenosyl-L-homocysteine. It functions in the pathway cofactor biosynthesis; adenosylcobalamin biosynthesis; cob(II)yrinate a,c-diamide from sirohydrochlorin (anaerobic route): step 6/10. Its function is as follows. Catalyzes the methylation of C-1 in cobalt-precorrin-5B to form cobalt-precorrin-6A. The protein is Cobalt-precorrin-5B C(1)-methyltransferase of Chromobacterium violaceum (strain ATCC 12472 / DSM 30191 / JCM 1249 / CCUG 213 / NBRC 12614 / NCIMB 9131 / NCTC 9757 / MK).